The following is a 136-amino-acid chain: ATP synthase epsilon chain (136 aa).

Belongs to the ATPase epsilon chain family. In terms of assembly, F-type ATPases have 2 components, CF(1) - the catalytic core - and CF(0) - the membrane proton channel. CF(1) has five subunits: alpha(3), beta(3), gamma(1), delta(1), epsilon(1). CF(0) has three main subunits: a, b and c.

Its subcellular location is the cell inner membrane. Produces ATP from ADP in the presence of a proton gradient across the membrane. This is ATP synthase epsilon chain from Persephonella marina (strain DSM 14350 / EX-H1).